The following is a 318-amino-acid chain: BRISC and BRCA1-A complex member 1 (318 aa).

Positions 1–67 (MDTSEPLEEG…TTAVPTNCTP (67 aa)) are disordered. A compositionally biased stretch (basic and acidic residues) spans 9 to 18 (EGDRTHEQRP). The segment at 86-287 (VIICLDLSEE…LELHNCMARL (202 aa)) is VWFA-like.

It belongs to the BABAM1 family. Component of the ARISC complex, at least composed of uimc1/rap80, abraxas1, brcc3/brcc36, BABAM2 and babam1/nba1. Component of the BRCA1-A complex, at least composed of brca1, bard1, uimc1/rap80, abraxas1, brcc3/brcc36, BABAM2 and babam1/nba1. In the BRCA1-A complex, interacts directly with abraxas1 and BABAM2. Component of the BRISC complex, at least composed of abraxas2, brcc3/brcc36, babam2 and babam1/nba1.

It is found in the cytoplasm. The protein localises to the nucleus. Component of the BRCA1-A complex, a complex that specifically recognizes 'Lys-63'-linked ubiquitinated histones H2A and H2AX at DNA lesions sites, leading to target the BRCA1-BARD1 heterodimer to sites of DNA damage at double-strand breaks (DSBs). The BRCA1-A complex also possesses deubiquitinase activity that specifically removes 'Lys-63'-linked ubiquitin on histones H2A and H2AX. In the BRCA1-A complex, it is required for the complex integrity and its localization at DSBs. Component of the BRISC complex, a multiprotein complex that specifically cleaves 'Lys-63'-linked ubiquitin in various substrates. In these 2 complexes, it is probably required to maintain the stability of BABAM2 and help the 'Lys-63'-linked deubiquitinase activity mediated by brcc3/brcc36 component. The BRISC complex is required for normal mitotic spindle assembly and microtubule attachment to kinetochores via its role in deubiquitinating numa1. Plays a role in interferon signaling via its role in the deubiquitination of the interferon receptor ifnar1; deubiquitination increases ifnar1 activity by enhancing its stability and cell surface expression. Down-regulates the response to bacterial lipopolysaccharide (LPS) via its role in ifnar1 deubiquitination. The polypeptide is BRISC and BRCA1-A complex member 1 (babam1) (Xenopus tropicalis (Western clawed frog)).